Reading from the N-terminus, the 347-residue chain is Lipopolysaccharide core heptosyltransferase OpsX (347 aa).

It belongs to the glycosyltransferase 9 family.

It functions in the pathway bacterial outer membrane biogenesis; LPS core biosynthesis. In terms of biological role, catalyzes heptose transfer to the lipopolysaccharide core. It transfers the first L-glycero-D-manno-heptose to the phosphorylated 3-deoxy-alpha-D-manno-octulosonic acid (Kdo-P) of the inner core. This is Lipopolysaccharide core heptosyltransferase OpsX from Haemophilus influenzae (strain ATCC 51907 / DSM 11121 / KW20 / Rd).